Reading from the N-terminus, the 396-residue chain is S-adenosylmethionine synthase (396 aa).

Position 16 (His16) interacts with ATP. Asp18 provides a ligand contact to Mg(2+). Glu44 serves as a coordination point for K(+). L-methionine is bound by residues Glu57 and Gln100. The flexible loop stretch occupies residues 100–110 (QSPDINQGVDR). ATP contacts are provided by residues 165 to 167 (DAK), 231 to 232 (KF), Asp240, 246 to 247 (RK), Ala263, and Lys267. L-methionine is bound at residue Asp240. Lys271 lines the L-methionine pocket.

This sequence belongs to the AdoMet synthase family. In terms of assembly, homotetramer; dimer of dimers. Requires Mg(2+) as cofactor. K(+) is required as a cofactor.

It is found in the cytoplasm. The enzyme catalyses L-methionine + ATP + H2O = S-adenosyl-L-methionine + phosphate + diphosphate. Its pathway is amino-acid biosynthesis; S-adenosyl-L-methionine biosynthesis; S-adenosyl-L-methionine from L-methionine: step 1/1. Catalyzes the formation of S-adenosylmethionine (AdoMet) from methionine and ATP. The overall synthetic reaction is composed of two sequential steps, AdoMet formation and the subsequent tripolyphosphate hydrolysis which occurs prior to release of AdoMet from the enzyme. The sequence is that of S-adenosylmethionine synthase from Ectopseudomonas mendocina (strain ymp) (Pseudomonas mendocina).